Here is a 457-residue protein sequence, read N- to C-terminus: Argininosuccinate lyase (457 aa).

The protein belongs to the lyase 1 family. Argininosuccinate lyase subfamily.

It is found in the cytoplasm. It carries out the reaction 2-(N(omega)-L-arginino)succinate = fumarate + L-arginine. Its pathway is amino-acid biosynthesis; L-arginine biosynthesis; L-arginine from L-ornithine and carbamoyl phosphate: step 3/3. This chain is Argininosuccinate lyase, found in Escherichia coli O7:K1 (strain IAI39 / ExPEC).